The primary structure comprises 384 residues: MSWQEKINAALDARRAADALRRRYPVAQGAGRWLVADDRQYLNFSCNDYLGLSHHPDIIRAWKQGAEQFGVGSGGSGHVSGYSVAHQALEEELAEWLGYSRALLFISGFAANQAVITAMTAKEDRIVADRLSHASLLEAASLSPAQLRRFTHNDVAHLARLLASPCPGQQLVVTEGVFSMDGDSAPLAEIQQVTQQHNGWLMVDDAHGTGVIGEQGRGSCWLQKVNPELLVVTFGKGFGVSGAAVLCSDAVADYLLQFARHLIYSTSMPPAQAQALRASLAVIRSDEGDARREKLAALITRFRAGVQDLPFTLADSCSAIQPLIVGDNSRALQLAEKLRQQGCWVTAIRPPTVPAGTARLRLTLTAAHEMQDIDRLLEVLHGNG.

A substrate-binding site is contributed by arginine 21. Residue glycine 108–phenylalanine 109 participates in pyridoxal 5'-phosphate binding. Histidine 133 is a binding site for substrate. Pyridoxal 5'-phosphate is bound by residues serine 179, histidine 207, and threonine 233. An N6-(pyridoxal phosphate)lysine modification is found at lysine 236. Threonine 352 is a binding site for substrate.

The protein belongs to the class-II pyridoxal-phosphate-dependent aminotransferase family. BioF subfamily. As to quaternary structure, homodimer. The cofactor is pyridoxal 5'-phosphate.

It catalyses the reaction 6-carboxyhexanoyl-[ACP] + L-alanine + H(+) = (8S)-8-amino-7-oxononanoate + holo-[ACP] + CO2. Its pathway is cofactor biosynthesis; biotin biosynthesis. Catalyzes the decarboxylative condensation of pimeloyl-[acyl-carrier protein] and L-alanine to produce 8-amino-7-oxononanoate (AON), [acyl-carrier protein], and carbon dioxide. This chain is 8-amino-7-oxononanoate synthase, found in Escherichia coli O17:K52:H18 (strain UMN026 / ExPEC).